A 263-amino-acid chain; its full sequence is 3-deoxy-manno-octulosonate cytidylyltransferase 1 (263 aa).

It belongs to the KdsB family.

The protein localises to the cytoplasm. The enzyme catalyses 3-deoxy-alpha-D-manno-oct-2-ulosonate + CTP = CMP-3-deoxy-beta-D-manno-octulosonate + diphosphate. Its pathway is nucleotide-sugar biosynthesis; CMP-3-deoxy-D-manno-octulosonate biosynthesis; CMP-3-deoxy-D-manno-octulosonate from 3-deoxy-D-manno-octulosonate and CTP: step 1/1. It functions in the pathway bacterial outer membrane biogenesis; lipopolysaccharide biosynthesis. Its function is as follows. Activates KDO (a required 8-carbon sugar) for incorporation into bacterial lipopolysaccharide in Gram-negative bacteria. This is 3-deoxy-manno-octulosonate cytidylyltransferase 1 from Burkholderia ambifaria (strain MC40-6).